A 491-amino-acid polypeptide reads, in one-letter code: UDP-N-acetylmuramate--L-alanine ligase (491 aa).

ATP is bound at residue 126 to 132 (GTHGKTT).

The protein belongs to the MurCDEF family.

Its subcellular location is the cytoplasm. It carries out the reaction UDP-N-acetyl-alpha-D-muramate + L-alanine + ATP = UDP-N-acetyl-alpha-D-muramoyl-L-alanine + ADP + phosphate + H(+). It functions in the pathway cell wall biogenesis; peptidoglycan biosynthesis. Functionally, cell wall formation. This Yersinia enterocolitica serotype O:8 / biotype 1B (strain NCTC 13174 / 8081) protein is UDP-N-acetylmuramate--L-alanine ligase.